Consider the following 138-residue polypeptide: MFAFKRSSCYFQVSNKIVKNGQIRGYISVADRVHRVTMFKMPKAEDQQRFLEQCRKMAADNQRNGSPYILSMVAGPAEDGPRTEGYTFVNKTEFASMEDMKYYETECPAHGEVKKVLGEITIDGMMTVFFKPQATGGA.

The 98-residue stretch at 33 to 130 (VHRVTMFKMP…TIDGMMTVFF (98 aa)) folds into the Stress-response A/B barrel domain.

The protein operates within secondary metabolite biosynthesis. Its function is as follows. Part of the gene cluster that mediates the biosynthesis of the lipopeptide fusaristatin A. Fusaristatin A consists of a polyketide chain linked to three amino acid residues glutamine (Gln), dehydroalanine (dehydro-Ala), and beta-aminoisobutyric acid. The biosynthesis starts with formation of a linear polyketide chain by the highly reducing polyketide synthase PKS6. The gene cluster does not contain an acyl-CoA ligase or an acyl-transferase, and it is therefore predicted that the polyketide is transferred directly to the nonribosomal peptide synthetase NRPS7. Modules 1-3 from NRPS7 incorporate dehydro-Ala, Gln, and beta-aminoisobutyric acid in the compound, which is released by cyclization. The beta-aminoisobutyric acid units are most likely not freely available to the NRPS, but can be synthesized from thymine, which requires a dehydrogenase, a monooxygenase, and an aminotransferase. The fusaristatin A cluster contains a cytochrome P450 monooxygenase (FGSG_08207) and an aminotransferase (FGSG_17085), which theoretically can perform two of the enzymatic steps. The enzymes may however also be involved in biosynthesis of dehydroalanine or modification of the polyketide. The dehydro-Ala residue can be a result of cyclization, where serine is dehydrated. The last gene of the cluster encodes a protein with an A/B barrel domain found in variable enzymes, which hampers functional prediction. This Gibberella zeae (strain ATCC MYA-4620 / CBS 123657 / FGSC 9075 / NRRL 31084 / PH-1) (Wheat head blight fungus) protein is Fusaristatin A biosynthesis cluster protein FGSG_08206.